Here is a 277-residue protein sequence, read N- to C-terminus: Shikimate dehydrogenase (NADP(+)) (277 aa).

Shikimate contacts are provided by residues 19-21 (SKS) and T66. Residue K70 is the Proton acceptor of the active site. D82 is an NADP(+) binding site. Shikimate-binding residues include N91 and D107. NADP(+)-binding positions include 133 to 137 (GAGGA), 157 to 162 (NRTRAR), and L222. A shikimate-binding site is contributed by Y224. G245 contributes to the NADP(+) binding site.

This sequence belongs to the shikimate dehydrogenase family. Homodimer.

It carries out the reaction shikimate + NADP(+) = 3-dehydroshikimate + NADPH + H(+). The protein operates within metabolic intermediate biosynthesis; chorismate biosynthesis; chorismate from D-erythrose 4-phosphate and phosphoenolpyruvate: step 4/7. Functionally, involved in the biosynthesis of the chorismate, which leads to the biosynthesis of aromatic amino acids. Catalyzes the reversible NADPH linked reduction of 3-dehydroshikimate (DHSA) to yield shikimate (SA). The sequence is that of Shikimate dehydrogenase (NADP(+)) from Roseobacter denitrificans (strain ATCC 33942 / OCh 114) (Erythrobacter sp. (strain OCh 114)).